We begin with the raw amino-acid sequence, 418 residues long: UDP-N-acetylglucosamine 1-carboxyvinyltransferase (418 aa).

22–23 provides a ligand contact to phosphoenolpyruvate; it reads KN. Arg-92 serves as a coordination point for UDP-N-acetyl-alpha-D-glucosamine. Cys-116 functions as the Proton donor in the catalytic mechanism. The residue at position 116 (Cys-116) is a 2-(S-cysteinyl)pyruvic acid O-phosphothioketal. UDP-N-acetyl-alpha-D-glucosamine is bound by residues 121–125, Asp-305, and Leu-327; that span reads RPIDL.

It belongs to the EPSP synthase family. MurA subfamily.

The protein resides in the cytoplasm. The catalysed reaction is phosphoenolpyruvate + UDP-N-acetyl-alpha-D-glucosamine = UDP-N-acetyl-3-O-(1-carboxyvinyl)-alpha-D-glucosamine + phosphate. It functions in the pathway cell wall biogenesis; peptidoglycan biosynthesis. Cell wall formation. Adds enolpyruvyl to UDP-N-acetylglucosamine. This is UDP-N-acetylglucosamine 1-carboxyvinyltransferase from Campylobacter jejuni subsp. jejuni serotype O:23/36 (strain 81-176).